The following is a 295-amino-acid chain: Ribosomal RNA small subunit methyltransferase A (295 aa).

S-adenosyl-L-methionine contacts are provided by asparagine 33, valine 35, glycine 60, glutamate 81, aspartate 111, and asparagine 129.

Belongs to the class I-like SAM-binding methyltransferase superfamily. rRNA adenine N(6)-methyltransferase family. RsmA subfamily.

It is found in the cytoplasm. It carries out the reaction adenosine(1518)/adenosine(1519) in 16S rRNA + 4 S-adenosyl-L-methionine = N(6)-dimethyladenosine(1518)/N(6)-dimethyladenosine(1519) in 16S rRNA + 4 S-adenosyl-L-homocysteine + 4 H(+). Functionally, specifically dimethylates two adjacent adenosines (A1518 and A1519) in the loop of a conserved hairpin near the 3'-end of 16S rRNA in the 30S particle. May play a critical role in biogenesis of 30S subunits. In Corynebacterium diphtheriae (strain ATCC 700971 / NCTC 13129 / Biotype gravis), this protein is Ribosomal RNA small subunit methyltransferase A.